A 179-amino-acid chain; its full sequence is Peptidyl-tRNA hydrolase 2, mitochondrial (179 aa).

The chain crosses the membrane as a helical span at residues 15 to 37 (STLGLAVGVACGMCLGWSLRVCF). Residues Lys47, Lys76, Lys81, Lys95, Lys106, Lys115, Lys171, and Lys177 each participate in a glycyl lysine isopeptide (Lys-Gly) (interchain with G-Cter in ubiquitin) cross-link.

It belongs to the PTH2 family. As to quaternary structure, monomer. Post-translationally, ubiquitinated by PRKN during mitophagy, leading to its degradation and enhancement of mitophagy. Deubiquitinated by USP30.

It is found in the mitochondrion outer membrane. It catalyses the reaction an N-acyl-L-alpha-aminoacyl-tRNA + H2O = an N-acyl-L-amino acid + a tRNA + H(+). Its function is as follows. Peptidyl-tRNA hydrolase which releases tRNAs from the ribosome during protein synthesis. Promotes caspase-independent apoptosis by regulating the function of two transcriptional regulators, AES and TLE1. The polypeptide is Peptidyl-tRNA hydrolase 2, mitochondrial (PTRH2) (Homo sapiens (Human)).